We begin with the raw amino-acid sequence, 429 residues long: Phosphoribosylamine--glycine ligase (429 aa).

In terms of domain architecture, ATP-grasp spans 109–316; that stretch reads KDFLARHNIP…LVELCLAACE (208 aa). ATP is bound at residue 135–196; that stretch reads LREKGAPIVI…EEFLDGEEAS (62 aa). Positions 212 to 236 are disordered; sequence SQDHKRVGDKDTGPNTGGMGAYSPA. The span at 213–223 shows a compositional bias: basic and acidic residues; the sequence is QDHKRVGDKDT. Glu-286 and Asn-288 together coordinate Mg(2+).

This sequence belongs to the GARS family. Monomer. The cofactor is Mg(2+). It depends on Mn(2+) as a cofactor.

It carries out the reaction 5-phospho-beta-D-ribosylamine + glycine + ATP = N(1)-(5-phospho-beta-D-ribosyl)glycinamide + ADP + phosphate + H(+). Its pathway is purine metabolism; IMP biosynthesis via de novo pathway; N(1)-(5-phospho-D-ribosyl)glycinamide from 5-phospho-alpha-D-ribose 1-diphosphate: step 2/2. In Escherichia coli O6:H1 (strain CFT073 / ATCC 700928 / UPEC), this protein is Phosphoribosylamine--glycine ligase.